The chain runs to 503 residues: Anthranilate synthase component 1 3 (503 aa).

Residue 269 to 271 (PYS) coordinates L-tryptophan. 304–305 (GT) contributes to the chorismate binding site. Glutamate 331 contributes to the Mg(2+) binding site. Chorismate-binding positions include tyrosine 419, arginine 439, 453–455 (GSG), and glycine 455. Glutamate 468 serves as a coordination point for Mg(2+).

Belongs to the anthranilate synthase component I family. In terms of assembly, tetramer of two components I and two components II. It depends on Mg(2+) as a cofactor.

The catalysed reaction is chorismate + L-glutamine = anthranilate + pyruvate + L-glutamate + H(+). It participates in amino-acid biosynthesis; L-tryptophan biosynthesis; L-tryptophan from chorismate: step 1/5. The sequence is that of Anthranilate synthase component 1 3 (trpE3) from Haloarcula marismortui (strain ATCC 43049 / DSM 3752 / JCM 8966 / VKM B-1809) (Halobacterium marismortui).